We begin with the raw amino-acid sequence, 302 residues long: MALVVICGQPCSGKSIAAVTLAETLKESETKQSVRIIDEASFHLDRNQNYANMPAEKNLRGKLRSDVDRSVSTGEIVIVDSLNSIKGYRYELWCIARAAGIRYCVVYCDVDEAHCRQWNKERSDRGEDGYDDGIFEDLVRRFEKPERRNRWDSPLFELYPSREVIDKSSPVILEAVTYLTKTVDSKTQDVRILQPSIATQAARFSEANSLYELDRATQEIINAIVEQQSLGAAISRVTLGNELPPIEICRPIGLPELRRLRRTFVKLMGQSSLSGPPLPTDADSAKRRFVDYLNREFGGNNA.

Position 8–15 (8–15 (GQPCSGKS)) interacts with ATP. A calmodulin-binding region spans residues 260–273 (LRRTFVKLMGQSSL).

It belongs to the KTI12 family. In terms of assembly, interacts with the elongator complex. Binds to calmodulin in a calcium-dependent manner. Expressed in roots, hypocotyls, cotyledons, shoot apices, stems, inflorescence apices, leaves and flowers.

It is found in the cytoplasm. The protein localises to the nucleus. Functionally, elongator complex-associated factor that is not a structural subunit but rather transiently contacts the complex. Regulates both meristem activity and organ growth; acts as a positive regulator of adaxial leaf patterning by modulating both cell division and differentiation. Required for an early step in synthesis of 5-carbamoylmethyl (ncm5) groups present on uridines (ncm5U) at the wobble position in tRNA. The protein is Protein KTI12 homolog of Arabidopsis thaliana (Mouse-ear cress).